A 71-amino-acid chain; its full sequence is Small ribosomal subunit protein bS21 (71 aa).

The protein belongs to the bacterial ribosomal protein bS21 family.

This chain is Small ribosomal subunit protein bS21, found in Baumannia cicadellinicola subsp. Homalodisca coagulata.